The sequence spans 791 residues: Protein Rf1, mitochondrial (791 aa).

The N-terminal 27 residues, 1 to 27 (MARRAASRAVGALRSDGSIQGRGGRAG), are a transit peptide targeting the mitochondrion. Residues 1-31 (MARRAASRAVGALRSDGSIQGRGGRAGGSGA) are disordered. Over residues 20–30 (QGRGGRAGGSG) the composition is skewed to gly residues. PPR repeat units follow at residues 86-120 (DLCT…GFRV), 121-156 (DAIA…GCIP), 157-194 (NVFS…GSPP), 195-229 (DVVS…GILP), 230-264 (DVVT…GVMP), 265-299 (DCMT…GVEP), 300-334 (DVVT…GLKP), 335-369 (EITT…GIHP), 370-404 (DHYV…GLNP), 405-439 (NAVT…GLSP), 440-474 (GNIV…GICL), 475-509 (NTIF…GVKP), 510-544 (NVIT…GLKP), 545-579 (NTVT…GVSP), 580-614 (DIIT…GTQI), 615-649 (ELST…DLKL), 650-684 (EART…GLVP), 685-719 (NYWT…GCTV), and 720-754 (DSGM…HFSL).

It is found in the mitochondrion. In terms of biological role, reduces the expression of the cytoplasmic male sterility (CMS)-associated mitochondrial gene ORF79, encoding a cytotoxic peptide. Can restore male fertility by blocking ORF79 production via endonucleolytic cleavage of dicistronic ATP6/ORF79 mRNA. Promotes the editing of ATP6 mRNAs independently of its cleavage function. The sequence is that of Protein Rf1, mitochondrial (Rf1) from Oryza sativa subsp. indica (Rice).